A 128-amino-acid chain; its full sequence is MAAMTTETTMTRIQLGAMGEALAVDHLTRMGLRVLHRNWRCRYGELDIIACDDATSTVVFVEVKTRTGDGYGGLPQAVTPRKVRRLRRLAGLWLAGQDRRWAAIRIDVIGVRVGRRRTPEITHLQGIG.

Belongs to the UPF0102 family.

This Mycobacterium avium (strain 104) protein is UPF0102 protein MAV_3752.